A 463-amino-acid polypeptide reads, in one-letter code: Hydrolase pyiE (463 aa).

Residue S252 is the Nucleophile of the active site. The interval 350–373 is disordered; the sequence is KSDGSRANGKKSHSPTDGGGVESD.

Belongs to the AB hydrolase superfamily. FUS2 hydrolase family. In terms of assembly, homodimer.

Its pathway is mycotoxin biosynthesis. Its function is as follows. Hydrolyase; part of the gene cluster that mediates the biosynthesis of the mycotoxin pyrichalasin H, a tyrosine-derived cytochalasan that inhibits the growth of rice seedlings, but also inhibits lymphocyte capping and actin polymerization and alters cell morphology. Pyrichalasin H is indicated as the responsible agent for the genus-specific pathogenicity of M.grisea toward crabgrass. The first step in the pathway is catalyzed by the O-methyltransferase pyiA which methylates free tyrosine to generate the precursor O-methyltyrosine. The hybrid PKS-NRPS pyiS, assisted by the enoyl reductase pyiC, are responsible for fusion of the O-methyltyrosine precursor and the polyketide backbone. The polyketide synthase module (PKS) of pyiS is responsible for the synthesis of the polyketide backbone and the downstream nonribosomal peptide synthetase (NRPS) amidates the carboxyl end of the polyketide with the O-methyltyrosine precursor. As the NRPS A-domain demonstrates substrate tolerance, pyiS can also use phenylalanine, tyrosine and even para-chlorophenylalanine as amino acid precursor, which leads to the production of novel cytochalasans, including halogenated cytochalasans. Because pyiS lacks a designated enoylreductase (ER) domain, the required activity is provided the enoyl reductase pyiC. Reduction by the hydrolyase pyiE leads to 1,5-dihydropyrrolone, which is substrate for dehydration and intra-molecular Diels-Alder cyclization by the Diels-Alderase pyiF to yield the required isoindolone-fused macrocycle. The tailoring cytochrome P450 monooxygenases piyD and piyG catalyze the hydroxylation at C-18 and C-7, respectivily, whereas the short-chain dehydrogenase/reductase pyiH reduces the carbonyl at C-21 in preparation for the transfer of an acetyl group by the acetyltransferase pyiB. These 3 reactions whose order is not clear yet, lead to the production of O-methylpyrichalasin J, a deacetylated pyrichalasin H. Finally, pyiB to converts O-methylpyrichalasin J into the final product pyrichalasin H via acetylation of C-21. The protein is Hydrolase pyiE of Pyricularia grisea (Crabgrass-specific blast fungus).